The sequence spans 476 residues: Transcription factor HBP-1b(c1) (476 aa).

Disordered stretches follow at residues 1 to 29 (ESRRGGGGPAAAAAAAGDPRGPMPGFGAP), 133 to 159 (HNNDNWGESSMADTSPRTDTSTDPDID), and 171 to 207 (QLAAPTASDSSDKSRDKLDHKSLRRLAQNREAARKSR). Positions 10–25 (AAAAAAAGDPRGPMPG) are enriched in low complexity. Residues 135 to 144 (NDNWGESSMA) show a composition bias toward polar residues. The span at 180–191 (SSDKSRDKLDHK) shows a compositional bias: basic and acidic residues. The bZIP domain maps to 189–252 (DHKSLRRLAQ…SSGDQSQSAS (64 aa)). A basic motif region spans residues 191–211 (KSLRRLAQNREAARKSRLRKK). Positions 201–242 (EAARKSRLRKKAYIQNLESSRLKLTQLEQELQRARQQGIFIS) form a coiled coil. Residues 217–231 (LESSRLKLTQLEQEL) are leucine-zipper. The 218-residue stretch at 256–473 (AVAFDMEYAR…RALSSLWLAR (218 aa)) folds into the DOG1 domain.

It belongs to the bZIP family. As to quaternary structure, binds DNA as a dimer.

It is found in the nucleus. Functionally, transcriptional activator that binds specifically to the DNA sequence 5'-TGACG-3'. Recognizes ocs elements like the as-1 motif of the cauliflower mosaic virus 35S promoter. Binding to the as-1-like cis elements mediate auxin- and salicylic acid-inducible transcription. Binds to the hexamer motif 5'-ACGTCA-3' of histone gene promoters. The chain is Transcription factor HBP-1b(c1) from Triticum aestivum (Wheat).